We begin with the raw amino-acid sequence, 432 residues long: Trigger factor (432 aa).

The PPIase FKBP-type domain occupies glycine 163 to proline 248.

It belongs to the FKBP-type PPIase family. Tig subfamily.

The protein resides in the cytoplasm. It catalyses the reaction [protein]-peptidylproline (omega=180) = [protein]-peptidylproline (omega=0). Functionally, involved in protein export. Acts as a chaperone by maintaining the newly synthesized protein in an open conformation. Functions as a peptidyl-prolyl cis-trans isomerase. This chain is Trigger factor, found in Nitratidesulfovibrio vulgaris (strain DSM 19637 / Miyazaki F) (Desulfovibrio vulgaris).